A 345-amino-acid chain; its full sequence is Phosphoribosylformylglycinamidine cyclo-ligase (345 aa).

The protein belongs to the AIR synthase family.

It localises to the cytoplasm. It carries out the reaction 2-formamido-N(1)-(5-O-phospho-beta-D-ribosyl)acetamidine + ATP = 5-amino-1-(5-phospho-beta-D-ribosyl)imidazole + ADP + phosphate + H(+). It functions in the pathway purine metabolism; IMP biosynthesis via de novo pathway; 5-amino-1-(5-phospho-D-ribosyl)imidazole from N(2)-formyl-N(1)-(5-phospho-D-ribosyl)glycinamide: step 2/2. The protein is Phosphoribosylformylglycinamidine cyclo-ligase of Shouchella clausii (strain KSM-K16) (Alkalihalobacillus clausii).